Consider the following 798-residue polypeptide: Vacuolar protein sorting-associated protein 53 homolog (798 aa).

It belongs to the VPS53 family. In terms of assembly, component of the Golgi-associated retrograde protein (GARP) complex, also called VFT (VPS fifty-three) complex, composed of vps-51, vps-52, vps-53 and vps-54. Within the complex interacts with vps-51, vps-52 and vps-54. Ubiquitously expressed, with particularly strong expression in neuronal cells. Specifically expressed in head and tail neurons and in the pharynx and ventral cord motor neurons.

It is found in the golgi apparatus. The protein localises to the trans-Golgi network membrane. It localises to the endosome membrane. Its subcellular location is the perikaryon. The protein resides in the cytoplasm. It is found in the perinuclear region. Its function is as follows. Acts as a component of the GARP complex that is involved in retrograde transport from early and late endosomes to the trans-Golgi network (TGN). The GARP complex facilitates tethering as well as SNARE complex assembly at the Golgi. Plays a role in the trafficking of cargo to dense-core vesicles, probably through association with the EARP-interacting protein eipr-1. Important for neuronal function. The sequence is that of Vacuolar protein sorting-associated protein 53 homolog from Caenorhabditis elegans.